Here is a 295-residue protein sequence, read N- to C-terminus: MIAELEGIDIRENEALKHYTYTQVGGPADFLAFPRNHYELSRIVDYANHNHIPWMVLGNASNLIVRDGGIRGFVIMFDKLNAVRLNGYTLEAEAGANLIETTKVAKFHSLTGFEFACGIPGSIGGAVFMNAGAYGGEIAHIFLSAKVLTPEGKIKKISAREMAFGYRHSVIQETGDIVISAKFALKPGNHDSICQEMNRLNHLRKLKQPLEFPSCGSVFKRPPGHFAGQLIMDANLKGHRVGGVEVSKKHAGFMINVADGSAKDYEDLIAHVIRTVEQASGVRLEPEVRIIGESL.

The region spanning 23–188 (QVGGPADFLA…ISAKFALKPG (166 aa)) is the FAD-binding PCMH-type domain. Arg-167 is an active-site residue. Residue Ser-217 is the Proton donor of the active site. Glu-287 is a catalytic residue.

This sequence belongs to the MurB family. Requires FAD as cofactor.

The protein resides in the cytoplasm. The catalysed reaction is UDP-N-acetyl-alpha-D-muramate + NADP(+) = UDP-N-acetyl-3-O-(1-carboxyvinyl)-alpha-D-glucosamine + NADPH + H(+). The protein operates within cell wall biogenesis; peptidoglycan biosynthesis. Functionally, cell wall formation. In Streptococcus equi subsp. equi (strain 4047), this protein is UDP-N-acetylenolpyruvoylglucosamine reductase.